An 87-amino-acid polypeptide reads, in one-letter code: MAERNSRKVYQGRVVSDKMDKTITVEVSTVKMHPVYGKRMKYSKKYYVHDEDNTAKTGDIVRIAETRPLSRNKRFRLLNIVEKAVII.

Belongs to the universal ribosomal protein uS17 family. Part of the 30S ribosomal subunit.

Its function is as follows. One of the primary rRNA binding proteins, it binds specifically to the 5'-end of 16S ribosomal RNA. This chain is Small ribosomal subunit protein uS17, found in Lacticaseibacillus casei (strain BL23) (Lactobacillus casei).